Here is a 380-residue protein sequence, read N- to C-terminus: Glucose-1-phosphate adenylyltransferase (380 aa).

Residues Gly-164, 179–180 (EK), and Ser-190 contribute to the alpha-D-glucose 1-phosphate site.

It belongs to the bacterial/plant glucose-1-phosphate adenylyltransferase family. Homotetramer.

It carries out the reaction alpha-D-glucose 1-phosphate + ATP + H(+) = ADP-alpha-D-glucose + diphosphate. It functions in the pathway glycan biosynthesis; glycogen biosynthesis. In terms of biological role, involved in the biosynthesis of ADP-glucose, a building block required for the elongation reactions to produce glycogen. Catalyzes the reaction between ATP and alpha-D-glucose 1-phosphate (G1P) to produce pyrophosphate and ADP-Glc. The protein is Glucose-1-phosphate adenylyltransferase of Ligilactobacillus salivarius (strain UCC118) (Lactobacillus salivarius).